Here is a 374-residue protein sequence, read N- to C-terminus: LRR repeats and ubiquitin-like domain-containing protein At2g30105 (374 aa).

The Ubiquitin-like domain maps to 13–87; the sequence is IKLTVKFGGK…LMLMASQGLH (75 aa). LRR repeat units follow at residues 128–151, 152–175, 177–200, 201–224, 225–248, 250–270, 272–293, 294–316, and 318–340; these read WKAT…VWDC, GSGV…ISSF, SMQK…GIAS, LKRL…MGSL, TSLR…GLLT, LEIL…IGNC, FLME…FTKL, RNLK…LFKM, and LQLS…QFEG.

The chain is LRR repeats and ubiquitin-like domain-containing protein At2g30105 from Arabidopsis thaliana (Mouse-ear cress).